We begin with the raw amino-acid sequence, 90 residues long: Probable Fe(2+)-trafficking protein (90 aa).

It belongs to the Fe(2+)-trafficking protein family.

Functionally, could be a mediator in iron transactions between iron acquisition and iron-requiring processes, such as synthesis and/or repair of Fe-S clusters in biosynthetic enzymes. This Paraburkholderia xenovorans (strain LB400) protein is Probable Fe(2+)-trafficking protein.